The following is a 178-amino-acid chain: MINNQTLARPYAKAAFEYASAANGSDAWSGMLGLAAAVVEAPEVAELLRNPRLTRESKVEAVLRLFADDVDEAFRNFIANLGEHDRLFVLPTVREQFEAYKAEAEKTIDVELETAYELSAEQLETLAAALSKRLDRSVNPRQVVNPALIGGLVIRAGDLVVDGSVRGKLSQLAESLKS.

It belongs to the ATPase delta chain family. As to quaternary structure, F-type ATPases have 2 components, F(1) - the catalytic core - and F(0) - the membrane proton channel. F(1) has five subunits: alpha(3), beta(3), gamma(1), delta(1), epsilon(1). F(0) has three main subunits: a(1), b(2) and c(10-14). The alpha and beta chains form an alternating ring which encloses part of the gamma chain. F(1) is attached to F(0) by a central stalk formed by the gamma and epsilon chains, while a peripheral stalk is formed by the delta and b chains.

The protein localises to the cell inner membrane. In terms of biological role, f(1)F(0) ATP synthase produces ATP from ADP in the presence of a proton or sodium gradient. F-type ATPases consist of two structural domains, F(1) containing the extramembraneous catalytic core and F(0) containing the membrane proton channel, linked together by a central stalk and a peripheral stalk. During catalysis, ATP synthesis in the catalytic domain of F(1) is coupled via a rotary mechanism of the central stalk subunits to proton translocation. This protein is part of the stalk that links CF(0) to CF(1). It either transmits conformational changes from CF(0) to CF(1) or is implicated in proton conduction. This Azotobacter vinelandii (strain DJ / ATCC BAA-1303) protein is ATP synthase subunit delta.